Reading from the N-terminus, the 60-residue chain is Cytotoxin 5 (60 aa).

Intrachain disulfides connect cysteine 3-cysteine 21, cysteine 14-cysteine 38, cysteine 42-cysteine 53, and cysteine 54-cysteine 59.

Belongs to the three-finger toxin family. Short-chain subfamily. Type IA cytotoxin sub-subfamily. Monomer in solution; Homodimer and oligomer in the presence of negatively charged lipids forming a pore with a size ranging between 20 and 30 Angstroms. As to expression, expressed by the venom gland.

It localises to the secreted. It is found in the target cell membrane. Functionally, shows cytolytic activity on many different cells by forming pore in lipid membranes. In vivo, increases heart rate or kills the animal by cardiac arrest. In addition, it binds to heparin with high affinity, interacts with Kv channel-interacting protein 1 (KCNIP1) in a calcium-independent manner, and binds to integrin alpha-V/beta-3 (ITGAV/ITGB3) with moderate affinity. This is Cytotoxin 5 from Naja haje haje (Egyptian cobra).